The following is a 191-amino-acid chain: Protein Ves (191 aa).

Belongs to the Ves family.

This Escherichia coli (strain K12 / MC4100 / BW2952) protein is Protein Ves.